A 202-amino-acid polypeptide reads, in one-letter code: Adenosylcobalamin/alpha-ribazole phosphatase (202 aa).

The Tele-phosphohistidine intermediate role is filled by His8. Residue Glu81 is the Proton donor/acceptor of the active site.

This sequence belongs to the phosphoglycerate mutase family. As to quaternary structure, monomer.

The catalysed reaction is adenosylcob(III)alamin 5'-phosphate + H2O = adenosylcob(III)alamin + phosphate. It catalyses the reaction alpha-ribazole 5'-phosphate + H2O = alpha-ribazole + phosphate. It participates in nucleoside biosynthesis; alpha-ribazole biosynthesis; alpha-ribazole from 5,6-dimethylbenzimidazole: step 2/2. Its function is as follows. Catalyzes the conversion of adenosylcobalamin 5'-phosphate to adenosylcobalamin (vitamin B12); involved in the assembly of the nucleotide loop of cobalamin. Also catalyzes the hydrolysis of the phospho group from alpha-ribazole 5'-phosphate to form alpha-ribazole. This is Adenosylcobalamin/alpha-ribazole phosphatase (cobC) from Salmonella typhimurium (strain LT2 / SGSC1412 / ATCC 700720).